A 90-amino-acid polypeptide reads, in one-letter code: Defensin-like protein 178 (90 aa).

The N-terminal stretch at Met-1–Gln-23 is a signal peptide. Disulfide bonds link Cys-27–Cys-66, Cys-36–Cys-55, Cys-39–Cys-60, and Cys-43–Cys-62.

It belongs to the DEFL family.

The protein resides in the secreted. This is Defensin-like protein 178 (LCR64) from Arabidopsis thaliana (Mouse-ear cress).